The sequence spans 437 residues: GTPase Der (437 aa).

2 consecutive EngA-type G domains span residues 4–168 (PVVA…PAED) and 177–352 (IRVS…QAHS). GTP is bound by residues 10 to 17 (GRPNVGKS), 57 to 61 (DTGGI), 120 to 123 (NKAD), 183 to 190 (GRPNVGKS), 230 to 234 (DTAGM), and 295 to 298 (NKWD). Positions 353 to 437 (MRIPTAVLND…PVRIWTRKKT (85 aa)) constitute a KH-like domain.

This sequence belongs to the TRAFAC class TrmE-Era-EngA-EngB-Septin-like GTPase superfamily. EngA (Der) GTPase family. Associates with the 50S ribosomal subunit.

In terms of biological role, GTPase that plays an essential role in the late steps of ribosome biogenesis. In Brevibacillus brevis (strain 47 / JCM 6285 / NBRC 100599), this protein is GTPase Der.